We begin with the raw amino-acid sequence, 458 residues long: Ammonium transporter Rh type B (458 aa).

Over 1–13 (MAGSPSRAAGRRL) the chain is Cytoplasmic. A helical transmembrane segment spans residues 14–34 (QLPLLCLFLQGATAVLFAVFV). Residues 35-61 (RYNHKTDAALWHRGNHSNADNEFYFRY) are Extracellular-facing. N-linked (GlcNAc...) asparagine glycosylation is present at asparagine 49. Residues 62-82 (PSFQDVHAMVFVGFGFLMVFL) traverse the membrane as a helical segment. At 83–86 (QRYG) the chain is on the cytoplasmic side. Residues 87–107 (FSSVGFTFLLAAFALQWSTLV) traverse the membrane as a helical segment. The Extracellular segment spans residues 108–124 (QGFLHSFHSGHIHVGVE). Residues 125 to 145 (SMINADFCAGAVLISFGAVLG) form a helical membrane-spanning segment. Residues 146-149 (KTGP) are Cytoplasmic-facing. Residues 150 to 170 (AQLLLMALLEVVLFGINEFVL) traverse the membrane as a helical segment. Residues 171–178 (LHLLGVRD) lie on the Extracellular side of the membrane. A helical membrane pass occupies residues 179–201 (AGGSMTIHTFGAYFGLVLSRVLY). Topologically, residues 202–219 (RPQLEKSKHRQGSVYHSD) are cytoplasmic. Residues 220-240 (LFAMIGTIFLWIFWPSFNSAL) traverse the membrane as a helical segment. At 241–251 (TALGAGQHRTA) the chain is on the extracellular side. Residues 252 to 272 (LNTYYSLAASTLGTFALSALV) traverse the membrane as a helical segment. Residues 273-282 (GEDGRLDMVH) are Cytoplasmic-facing. A helical transmembrane segment spans residues 283–303 (IQNAALAGGVVVGTSSEMMLT). Proline 304 is a topological domain (extracellular). A helical membrane pass occupies residues 305 to 325 (FGALAAGFLAGTVSTLGYKFF). Residues 326-346 (TPILESKFKVQDTCGVHNLHG) are Cytoplasmic-facing. The helical transmembrane segment at 347-367 (MPGVLGALLGVLVAGLATHEA) threads the bilayer. The Extracellular portion of the chain corresponds to 368–393 (YGDGLESVFPLIAEGQRSATSQAMLQ). The helical transmembrane segment at 394–414 (LFGLFVTLMFASVGGGLGGLL) threads the bilayer. At 415–458 (LKLPFLDSPPDSQCYEDQVHWQVPGEHEDEAQRPLRVEEADTQA) the chain is on the cytoplasmic side. An interaction with ANK3 region spans residues 416-424 (KLPFLDSPP). The Basolateral sorting signal motif lies at 429 to 432 (YEDQ). The disordered stretch occupies residues 439-458 (GEHEDEAQRPLRVEEADTQA). A compositionally biased stretch (basic and acidic residues) spans 444–458 (EAQRPLRVEEADTQA).

Belongs to the ammonium transporter (TC 2.A.49) family. Rh subfamily. In terms of assembly, interacts (via C-terminus) with ANK2 and ANK3; required for targeting to the basolateral membrane. In terms of processing, N-glycosylated.

The protein localises to the cell membrane. It is found in the basolateral cell membrane. It catalyses the reaction NH4(+)(in) = NH4(+)(out). The enzyme catalyses methylamine(out) = methylamine(in). The catalysed reaction is CO2(out) = CO2(in). Its function is as follows. Ammonium transporter involved in the maintenance of acid-base homeostasis. Transports ammonium and its related derivative methylammonium across the basolateral plasma membrane of epithelial cells likely contributing to renal transepithelial ammonia transport and ammonia metabolism. May transport either NH4(+) or NH3 ammonia species predominantly mediating an electrogenic NH4(+) transport. May act as a CO2 channel providing for renal acid secretion. The chain is Ammonium transporter Rh type B (RHBG) from Macaca mulatta (Rhesus macaque).